The primary structure comprises 584 residues: MSQRVRRNGSPTPAGALAGGAVGPPGGPGSRLQPMRATVPFQLKQQQQHGSPTRGGGGGGNNGGNGGASGPSGGGGSGGPRTASRSTSPTRGGGGSAAARTSPTVATQTGASVTSTRGTSPTRGTAPGARSSPPRPQPPPPLLGTVSSPSSSPTHLWPSEVIAAPPSARVRHRRRSPEQGRPSAEKRSPSAPVCKAGDKTHPPSSSSSSIIRRTSSLDTLAAPYLAGHWPRDIRGQAAPCMRDKATQTESAWAEEYEKKKGSHKRSSSWGSTEQLKEIAKLRQQLQRSKHSSRHHRDKERQSPFHGNHAAINQSQAPAPKSTLVPAGPITKSSGSRFRNSVEGLNQEIEIIIKETGEKEEQLIPQDIPDGHRAPPPLAQRSSSTRSIDTQTPGGADKGSNNSSRSQSVSPTSFLTISNEGSEESPCSADDLLADPRDKENGNNSPLPKYATSPKPNNSYMFKREPPEGCERVKVFEECSPKQLHEIPAFYCPDKNKVNFIPKSGSAFCLVSILKPLLPTPDLTLKGSGHSLTVTTGMTTTLLQPISMASLSTNTEQERVSRGTSTVLPSASLHAPPEPIEEAEG.

The disordered stretch occupies residues 1 to 214; the sequence is MSQRVRRNGS…SSSSSIIRRT (214 aa). S10 is modified (phosphoserine). Over residues 53-79 the composition is skewed to gly residues; that stretch reads TRGGGGGGNNGGNGGASGPSGGGGSGG. Residues 80–90 show a composition bias toward low complexity; the sequence is PRTASRSTSPT. S102 carries the post-translational modification Phosphoserine. Residues 114–132 show a composition bias toward low complexity; it reads TSTRGTSPTRGTAPGARSS. Pro residues predominate over residues 133 to 142; the sequence is PPRPQPPPPL. A compositionally biased stretch (polar residues) spans 145 to 154; it reads TVSSPSSSPT. Over residues 204–214 the composition is skewed to low complexity; it reads SSSSSSIIRRT. Phosphoserine is present on residues S206, S215, S216, and S268. Disordered stretches follow at residues 227–461 and 551–584; these read GHWP…SYMF and STNT…EAEG. Basic residues predominate over residues 287–297; that stretch reads RSKHSSRHHRD. Phosphoserine is present on S340. Positions 350-361 are enriched in basic and acidic residues; sequence IIIKETGEKEEQ. The segment covering 379–392 has biased composition (polar residues); sequence QRSSSTRSIDTQTP. S386 carries the phosphoserine modification. Low complexity predominate over residues 399–412; the sequence is SNNSSRSQSVSPTS. S444 and S452 each carry phosphoserine.

This chain is Protein FAM117B (Fam117b), found in Mus musculus (Mouse).